Consider the following 469-residue polypeptide: Sulfate adenylyltransferase subunit 1 (469 aa).

The region spanning 22–236 is the tr-type G domain; that stretch reads KDMLRFLTCG…TLENIEIGND (215 aa). The interval 31-38 is G1; that stretch reads GSVDDGKS. 31–38 is a GTP binding site; sequence GSVDDGKS. The interval 89 to 93 is G2; sequence GITID. The segment at 110–113 is G3; it reads DTPG. GTP-binding positions include 110 to 114 and 165 to 168; these read DTPGH and NKMD. The G4 stretch occupies residues 165–168; it reads NKMD. Residues 202 to 204 are G5; it reads SAL.

The protein belongs to the TRAFAC class translation factor GTPase superfamily. Classic translation factor GTPase family. CysN/NodQ subfamily. In terms of assembly, heterodimer composed of CysD, the smaller subunit, and CysN.

It carries out the reaction sulfate + ATP + H(+) = adenosine 5'-phosphosulfate + diphosphate. The protein operates within sulfur metabolism; hydrogen sulfide biosynthesis; sulfite from sulfate: step 1/3. With CysD forms the ATP sulfurylase (ATPS) that catalyzes the adenylation of sulfate producing adenosine 5'-phosphosulfate (APS) and diphosphate, the first enzymatic step in sulfur assimilation pathway. APS synthesis involves the formation of a high-energy phosphoric-sulfuric acid anhydride bond driven by GTP hydrolysis by CysN coupled to ATP hydrolysis by CysD. In Pseudoalteromonas atlantica (strain T6c / ATCC BAA-1087), this protein is Sulfate adenylyltransferase subunit 1.